The following is a 137-amino-acid chain: Small ribosomal subunit protein uS12 (137 aa).

Positions 1 to 57 (MPTINQLVRKPRKSKVEKSKSPALNVGYNSRKKVQTNVSSPQKRGVATRVGTMTPKK) are disordered. 3-methylthioaspartic acid is present on Asp-102.

This sequence belongs to the universal ribosomal protein uS12 family. Part of the 30S ribosomal subunit. Contacts proteins S8 and S17. May interact with IF1 in the 30S initiation complex.

Functionally, with S4 and S5 plays an important role in translational accuracy. In terms of biological role, interacts with and stabilizes bases of the 16S rRNA that are involved in tRNA selection in the A site and with the mRNA backbone. Located at the interface of the 30S and 50S subunits, it traverses the body of the 30S subunit contacting proteins on the other side and probably holding the rRNA structure together. The combined cluster of proteins S8, S12 and S17 appears to hold together the shoulder and platform of the 30S subunit. In Streptococcus suis (strain 98HAH33), this protein is Small ribosomal subunit protein uS12.